The sequence spans 599 residues: Glycerophosphodiester phosphodiesterase domain-containing protein 5 (599 aa).

Over Met1–Arg42 the chain is Cytoplasmic. 2 disulfide bridges follow: Cys15–Cys18 and Cys25–Cys576. Residues Leu43–Trp63 traverse the membrane as a helical segment. Residues Glu64–Ser87 are Extracellular-facing. The chain crosses the membrane as a helical span at residues Ile88–Ala108. Over Leu109–Lys125 the chain is Cytoplasmic. Residues Ile126–Trp146 form a helical membrane-spanning segment. Topologically, residues Asp147–Thr160 are extracellular. A helical membrane pass occupies residues Ala161–Gly181. At Gln182 to Gln192 the chain is on the cytoplasmic side. The helical transmembrane segment at Met193–Ile213 threads the bilayer. Over Ser214–Arg497 the chain is Extracellular. The region spanning Pro228–Pro485 is the GP-PDE domain. Asn301, Asn336, Asn352, Asn374, and Asn448 each carry an N-linked (GlcNAc...) asparagine glycan. Residues Leu498 to Gln518 form a helical membrane-spanning segment. The Cytoplasmic segment spans residues Asn519 to Asn599.

The protein belongs to the glycerophosphoryl diester phosphodiesterase family. As to quaternary structure, interacts with PRDX1; forms a mixed-disulfide with PRDX1, leading to disrupt intramolecular disulfide bond between Cys-25 and Cys-576. Intramolecular disulfide bond between Cys-25 and Cys-576 is reduced by PRDX1. As to expression, detected in mature motor neurons.

Its subcellular location is the endomembrane system. The protein localises to the cytoplasm. The protein resides in the perinuclear region. It localises to the cell projection. It is found in the growth cone. It catalyses the reaction a 1,2-diacyl-sn-glycero-3-phospho-(1D-myo-inositol-4,5-bisphosphate) + H2O = 1D-myo-inositol 1,4,5-trisphosphate + a 1,2-diacyl-sn-glycerol + H(+). The enzyme catalyses sn-glycerol 3-phosphocholine + H2O = sn-glycerol 3-phosphate + choline + H(+). Its activity is regulated as follows. Activated by PRDX1 by reduction of an intramolecular disulfide bond. Functionally, glycerophosphodiester phosphodiesterase that promotes cell cycle exit and drives spinal motor neuron differentiation. Mediates the cleavage of glycosylphosphatidylinositol (GPI) anchor of target proteins: removes the GPI-anchor of RECK, leading to release RECK from the plasma membrane. May contribute to the osmotic regulation of cellular glycerophosphocholine. The polypeptide is Glycerophosphodiester phosphodiesterase domain-containing protein 5 (GDPD5) (Gallus gallus (Chicken)).